The primary structure comprises 268 residues: 3-methyl-2-oxobutanoate hydroxymethyltransferase (268 aa).

The Mg(2+) site is built by Asp-41 and Asp-80. Residues 41–42 (DS), Asp-80, and Lys-110 contribute to the 3-methyl-2-oxobutanoate site. Glu-112 is a binding site for Mg(2+). The active-site Proton acceptor is Glu-178.

It belongs to the PanB family. As to quaternary structure, homodecamer; pentamer of dimers. The cofactor is Mg(2+).

Its subcellular location is the cytoplasm. The catalysed reaction is 3-methyl-2-oxobutanoate + (6R)-5,10-methylene-5,6,7,8-tetrahydrofolate + H2O = 2-dehydropantoate + (6S)-5,6,7,8-tetrahydrofolate. It participates in cofactor biosynthesis; coenzyme A biosynthesis. Functionally, catalyzes the reversible reaction in which hydroxymethyl group from 5,10-methylenetetrahydrofolate is transferred onto alpha-ketoisovalerate to form ketopantoate. The polypeptide is 3-methyl-2-oxobutanoate hydroxymethyltransferase (Natronomonas pharaonis (strain ATCC 35678 / DSM 2160 / CIP 103997 / JCM 8858 / NBRC 14720 / NCIMB 2260 / Gabara) (Halobacterium pharaonis)).